The primary structure comprises 433 residues: Serine hydroxymethyltransferase (433 aa).

121 to 123 (AHV) is a binding site for (6S)-5,6,7,8-tetrahydrofolate. Lys227 carries the N6-(pyridoxal phosphate)lysine modification. Residue Glu243 participates in (6S)-5,6,7,8-tetrahydrofolate binding.

This sequence belongs to the SHMT family. As to quaternary structure, homodimer. Pyridoxal 5'-phosphate is required as a cofactor.

It is found in the cytoplasm. The protein operates within amino-acid biosynthesis; glycine biosynthesis; glycine from L-serine: step 1/1. In terms of biological role, catalyzes the reversible interconversion of serine and glycine with a modified folate serving as the one-carbon carrier. Also exhibits a pteridine-independent aldolase activity toward beta-hydroxyamino acids, producing glycine and aldehydes, via a retro-aldol mechanism. The polypeptide is Serine hydroxymethyltransferase (Saccharolobus islandicus (strain L.S.2.15 / Lassen #1) (Sulfolobus islandicus)).